Here is a 334-residue protein sequence, read N- to C-terminus: Glyceraldehyde-3-phosphate dehydrogenase (334 aa).

NAD(+) contacts are provided by residues 11–12 (RI), aspartate 33, and serine 119. D-glyceraldehyde 3-phosphate contacts are provided by residues 149–151 (SCT) and threonine 180. Catalysis depends on cysteine 150, which acts as the Nucleophile. Residue asparagine 181 coordinates NAD(+). D-glyceraldehyde 3-phosphate contacts are provided by residues arginine 197, 210–211 (TG), and arginine 233. Asparagine 314 is an NAD(+) binding site.

Belongs to the glyceraldehyde-3-phosphate dehydrogenase family. In terms of assembly, homotetramer.

Its subcellular location is the cytoplasm. It catalyses the reaction D-glyceraldehyde 3-phosphate + phosphate + NAD(+) = (2R)-3-phospho-glyceroyl phosphate + NADH + H(+). Its pathway is carbohydrate degradation; glycolysis; pyruvate from D-glyceraldehyde 3-phosphate: step 1/5. Functionally, catalyzes the oxidative phosphorylation of glyceraldehyde 3-phosphate (G3P) to 1,3-bisphosphoglycerate (BPG) using the cofactor NAD. The first reaction step involves the formation of a hemiacetal intermediate between G3P and a cysteine residue, and this hemiacetal intermediate is then oxidized to a thioester, with concomitant reduction of NAD to NADH. The reduced NADH is then exchanged with the second NAD, and the thioester is attacked by a nucleophilic inorganic phosphate to produce BPG. This chain is Glyceraldehyde-3-phosphate dehydrogenase (gap), found in Clostridium acetobutylicum (strain ATCC 824 / DSM 792 / JCM 1419 / IAM 19013 / LMG 5710 / NBRC 13948 / NRRL B-527 / VKM B-1787 / 2291 / W).